The following is a 152-amino-acid chain: MQLTELIETTVTGLGYELVDLERTGRGMLCVYIDQPAGISLEDCEKVTRQLQHVLTVENIDYERLEVSSPGLDRPLKKLADFERFAGSEVSVTLKKPLDGRKTYRGILHAPNGETIGLEFERKKGEAAMLDFTLADIDKARLIPQVDFRSRK.

Belongs to the RimP family.

It localises to the cytoplasm. Functionally, required for maturation of 30S ribosomal subunits. This Burkholderia multivorans (strain ATCC 17616 / 249) protein is Ribosome maturation factor RimP.